The chain runs to 209 residues: Uracil phosphoribosyltransferase (209 aa).

5-phospho-alpha-D-ribose 1-diphosphate-binding positions include Arg-79, Arg-104, and 131–139 (DPMLATGHT). Uracil is bound by residues Ile-194 and 199 to 201 (GDA). Asp-200 provides a ligand contact to 5-phospho-alpha-D-ribose 1-diphosphate.

Belongs to the UPRTase family. Mg(2+) serves as cofactor.

The enzyme catalyses UMP + diphosphate = 5-phospho-alpha-D-ribose 1-diphosphate + uracil. It participates in pyrimidine metabolism; UMP biosynthesis via salvage pathway; UMP from uracil: step 1/1. With respect to regulation, allosterically activated by GTP. In terms of biological role, catalyzes the conversion of uracil and 5-phospho-alpha-D-ribose 1-diphosphate (PRPP) to UMP and diphosphate. This is Uracil phosphoribosyltransferase from Caulobacter sp. (strain K31).